Here is a 57-residue protein sequence, read N- to C-terminus: Protein translocase subunit SecE (57 aa).

Residues 33–53 (GAGIFLVGLLGFIIFAVMSFL) traverse the membrane as a helical segment.

Belongs to the SecE/SEC61-gamma family. In terms of assembly, component of the Sec protein translocase complex. Heterotrimer consisting of SecY (alpha), SecG (beta) and SecE (gamma) subunits. The heterotrimers can form oligomers, although 1 heterotrimer is thought to be able to translocate proteins. Interacts with the ribosome. May interact with SecDF, and other proteins may be involved.

It is found in the cell membrane. Its function is as follows. Essential subunit of the Sec protein translocation channel SecYEG. Clamps together the 2 halves of SecY. May contact the channel plug during translocation. The protein is Protein translocase subunit SecE of Haloferax mediterranei (strain ATCC 33500 / DSM 1411 / JCM 8866 / NBRC 14739 / NCIMB 2177 / R-4) (Halobacterium mediterranei).